Consider the following 443-residue polypeptide: MDLALFFRNEVKPALGCTEPGAVAYAASIAARHCPGEPLSVALSLSLSMFKNGRDVGIPGTGGLRGNRLAAVLGVLAGDADKGLMALEHIDMAVVERAQTLLDAGMVTEEVVDGVPGVYAAVTLRCAGHEVTVTVAGRHDRVASIVVDGEVVGGEGMERAPEADGTLHGGASCEPSASFTKPPLPAYLEELRECDFAQLWDMAAGIDATLEQELLRGAAMNMAVARMGLESGWGLGVGHTLAAHAEAADLHARIRFMAGAAADVRMAGAPQPVMSSAGSGNHGITATVPVAVAAEGLGVSPRVQAEALALSHLVTGYLKAHTGRLTPICGCSVAAGAGAAAGIVKVLGGNAVQAERAVASLMASLMGMLCDGAKGSCGLKVATAAGEAYAAALLGMDDRGVQRPEGVVNPDIATTARALARLSREGFAAADAVMVELLGGGKH.

This sequence belongs to the UPF0597 family.

The chain is UPF0597 protein DVU_0440 from Nitratidesulfovibrio vulgaris (strain ATCC 29579 / DSM 644 / CCUG 34227 / NCIMB 8303 / VKM B-1760 / Hildenborough) (Desulfovibrio vulgaris).